Consider the following 157-residue polypeptide: 2-C-methyl-D-erythritol 2,4-cyclodiphosphate synthase (157 aa).

A divalent metal cation is bound by residues Asp-8 and His-10. Residues 8-10 and 34-35 contribute to the 4-CDP-2-C-methyl-D-erythritol 2-phosphate site; these read DVH and HS. An a divalent metal cation-binding site is contributed by His-42. 4-CDP-2-C-methyl-D-erythritol 2-phosphate-binding positions include 56-58, 61-65, 100-106, 132-135, Phe-139, and Arg-142; these read DIG, FPDTD, AQAPKMA, and TTTE.

The protein belongs to the IspF family. In terms of assembly, homotrimer. Requires a divalent metal cation as cofactor.

The enzyme catalyses 4-CDP-2-C-methyl-D-erythritol 2-phosphate = 2-C-methyl-D-erythritol 2,4-cyclic diphosphate + CMP. Its pathway is isoprenoid biosynthesis; isopentenyl diphosphate biosynthesis via DXP pathway; isopentenyl diphosphate from 1-deoxy-D-xylulose 5-phosphate: step 4/6. Functionally, involved in the biosynthesis of isopentenyl diphosphate (IPP) and dimethylallyl diphosphate (DMAPP), two major building blocks of isoprenoid compounds. Catalyzes the conversion of 4-diphosphocytidyl-2-C-methyl-D-erythritol 2-phosphate (CDP-ME2P) to 2-C-methyl-D-erythritol 2,4-cyclodiphosphate (ME-CPP) with a corresponding release of cytidine 5-monophosphate (CMP). The polypeptide is 2-C-methyl-D-erythritol 2,4-cyclodiphosphate synthase (Pseudomonas putida (strain GB-1)).